The primary structure comprises 872 residues: Cellulose synthase catalytic subunit [UDP-forming] (872 aa).

Transmembrane regions (helical) follow at residues Ser-30–Leu-50, Ile-151–Phe-171, Pro-173–Met-193, and Leu-230–Gly-250. The segment at Leu-271–Val-364 is catalytic subdomain A. Asp-313 is an active-site residue. Positions 360 and 362 each coordinate substrate. Positions Lys-441–Met-501 are catalytic subdomain B. Asp-457 is an active-site residue. The next 5 membrane-spanning stretches (helical) occupy residues Val-525–Leu-545, Phe-547–Leu-567, Ile-592–Pro-612, Ile-640–Gly-660, and Val-668–Val-688. Positions Gln-694–Phe-790 constitute a PilZ domain. Residues Ser-833 to Pro-853 traverse the membrane as a helical segment.

The protein belongs to the glycosyltransferase 2 family. Mg(2+) serves as cofactor.

It is found in the cell inner membrane. The catalysed reaction is [(1-&gt;4)-beta-D-glucosyl](n) + UDP-alpha-D-glucose = [(1-&gt;4)-beta-D-glucosyl](n+1) + UDP + H(+). The protein operates within glycan metabolism; bacterial cellulose biosynthesis. Its activity is regulated as follows. Activated by bis-(3'-5') cyclic diguanylic acid (c-di-GMP). In terms of biological role, catalytic subunit of cellulose synthase. It polymerizes uridine 5'-diphosphate glucose to cellulose, which is produced as an extracellular component for mechanical and chemical protection at the onset of the stationary phase, when the cells exhibit multicellular behavior (rdar morphotype). Coexpression of cellulose and thin aggregative fimbriae (curli fimbrae or fibers) leads to a hydrophobic network with tightly packed cells embedded in a highly inert matrix that confers cohesion, elasticity and tissue-like properties to colonies. This is Cellulose synthase catalytic subunit [UDP-forming] (bcsA) from Escherichia coli (strain K12).